A 295-amino-acid chain; its full sequence is Protoheme IX farnesyltransferase (295 aa).

The Cytoplasmic segment spans residues Met-1–Ile-9. The chain crosses the membrane as a helical span at residues Thr-10–Leu-28. Residues Ala-29–Ala-37 lie on the Periplasmic side of the membrane. The helical transmembrane segment at Leu-38 to Phe-56 threads the bilayer. Residues Asn-57 to Gln-78 lie on the Cytoplasmic side of the membrane. A helical transmembrane segment spans residues Gly-79–Gly-97. Residues Phe-98–Pro-107 are Periplasmic-facing. A helical transmembrane segment spans residues Leu-108–Leu-126. Residues Trp-127 to Pro-197 lie on the Cytoplasmic side of the membrane. The helical transmembrane segment at Val-198 to Phe-216 threads the bilayer. Residues Val-217–Tyr-228 are Periplasmic-facing. Residues Ala-229–Met-247 traverse the membrane as a helical segment. Residues Ala-248 to Ser-268 are Cytoplasmic-facing. A helical transmembrane segment spans residues Ile-269 to Ala-287. Topologically, residues Asp-288–Arg-295 are periplasmic.

It belongs to the UbiA prenyltransferase family. The cofactor is Mg(2+). Requires Ca(2+) as cofactor.

The protein resides in the cell inner membrane. The enzyme catalyses heme b + (2E,6E)-farnesyl diphosphate + H2O = Fe(II)-heme o + diphosphate. Functionally, converts protoheme IX and farnesyl diphosphate to heme O. The sequence is that of Protoheme IX farnesyltransferase (cyoE) from Pseudomonas putida (Arthrobacter siderocapsulatus).